The chain runs to 168 residues: uncharacterized protein (168 aa).

4 helical membrane-spanning segments follow: residues M1–R21, P41–M61, W68–C88, and V123–F143.

The protein localises to the cell membrane. This is an uncharacterized protein from Bacillus subtilis (strain 168).